An 88-amino-acid chain; its full sequence is Apolipoprotein C-I (88 aa).

A signal peptide spans 1-26; that stretch reads MRLFIALPVLIVVVAMTLEGPAPAQA.

This sequence belongs to the apolipoprotein C1 family. Adult and fetal liver.

It is found in the secreted. Functionally, inhibitor of lipoprotein binding to the low density lipoprotein (LDL) receptor, LDL receptor-related protein, and very low density lipoprotein (VLDL) receptor. Associates with high density lipoproteins (HDL) and the triacylglycerol-rich lipoproteins in the plasma and makes up about 10% of the protein of the VLDL and 2% of that of HDL. Appears to interfere directly with fatty acid uptake and is also the major plasma inhibitor of cholesteryl ester transfer protein (CETP). Modulates the interaction of APOE with beta-migrating VLDL and inhibits binding of beta-VLDL to the LDL receptor-related protein. Binds free fatty acids and reduces their intracellular esterification. This Mus musculus (Mouse) protein is Apolipoprotein C-I (Apoc1).